Here is a 286-residue protein sequence, read N- to C-terminus: Co-chaperone protein DjlA (286 aa).

The Periplasmic segment spans residues 1–6 (MQFIGK). The chain crosses the membrane as a helical span at residues 7–31 (IIGFFIGYKLFGGLFGGLLGIFIGH). The Cytoplasmic portion of the chain corresponds to 32 to 286 (LADKKLYELG…DLICKTKGWK (255 aa)). Positions 220 to 286 (DAYTVLGINE…DLICKTKGWK (67 aa)) constitute a J domain.

As to quaternary structure, homodimer.

It is found in the cell inner membrane. Its function is as follows. Regulatory DnaK co-chaperone. Direct interaction between DnaK and DjlA is needed for the induction of the wcaABCDE operon, involved in the synthesis of a colanic acid polysaccharide capsule, possibly through activation of the RcsB/RcsC phosphotransfer signaling pathway. The colanic acid capsule may help the bacterium survive conditions outside the host. The chain is Co-chaperone protein DjlA from Haemophilus ducreyi (strain 35000HP / ATCC 700724).